The following is a 590-amino-acid chain: Arginine--tRNA ligase (590 aa).

A 'HIGH' region motif is present at residues 134 to 144 (ANPTGPMHVGH).

The protein belongs to the class-I aminoacyl-tRNA synthetase family. As to quaternary structure, monomer.

It is found in the cytoplasm. It carries out the reaction tRNA(Arg) + L-arginine + ATP = L-arginyl-tRNA(Arg) + AMP + diphosphate. This chain is Arginine--tRNA ligase, found in Beijerinckia indica subsp. indica (strain ATCC 9039 / DSM 1715 / NCIMB 8712).